The sequence spans 265 residues: Small ribosomal subunit protein eS1 (265 aa).

Residues 234 to 256 are disordered; sequence EGSTTTSKGVTSEGGEKVDRVDG. Residues 247–256 show a composition bias toward basic and acidic residues; it reads GGEKVDRVDG.

The protein belongs to the eukaryotic ribosomal protein eS1 family. In terms of assembly, component of the small ribosomal subunit. Mature ribosomes consist of a small (40S) and a large (60S) subunit. The 40S subunit contains about 33 different proteins and 1 molecule of RNA (18S). The 60S subunit contains about 49 different proteins and 3 molecules of RNA (28S, 5.8S and 5S).

It is found in the cytoplasm. This Aplysia californica (California sea hare) protein is Small ribosomal subunit protein eS1.